The chain runs to 56 residues: Large ribosomal subunit protein bL32 (56 aa).

The span at 1 to 16 shows a compositional bias: basic residues; that stretch reads MAVQKSKKSRSRRDMR. The interval 1–56 is disordered; the sequence is MAVQKSKKSRSRRDMRRSHDAIDGPTLSVDSTTGETHRRHHVTADGYYKGRKVVNK.

It belongs to the bacterial ribosomal protein bL32 family.

The polypeptide is Large ribosomal subunit protein bL32 (Idiomarina loihiensis (strain ATCC BAA-735 / DSM 15497 / L2-TR)).